Consider the following 1250-residue polypeptide: MDRDSSMQAKNLDAQCNPDLKMASANSETLASATHELKIMDVEGGALVDPDHIEEVETSMVIVVDDDDGDVAMVVEEDKHPMRDDPCIEDIMDDEHAPLVAELQSALNNPDDKQASEDPLLEDQEREPDAMSTKTEPSSDAESSHSYHDPMGLLERIEIHDPGDSQDDDDEDDESSNGGGVDGGMRRKMPRAQRWLLWMKRWPWILHEDSDGTLAFCLYCNISINVNNRSRHIQQHNVSLSHQERECNYLAFKKSEEETRGAISDNEIKHEFGTKSYVAAMKQKRISETEAFNNFNWLRWLRWHPWLERSMPTGTIGTCRICSVRMNVEFVYLRKRHETTKGHMEALRNLDSDKRSRKRKRSKSNSVTNSGGDEAEREKESEPEVGPEDAQDTPVVMMNGDVDSGDDPGKWCALIPDTNPQQCRCTLCNCTMAITSFLRHCKTRAHCHMLSTPAEKGSSDIRGIWAVFADMHPWLIADPEDPSIGYCSVCRKRFMYGNSEIKRKNHEKSEKHTLALASAKAGIEVGSADGRGGDNMDEEEAAASDQAQSSQTDDSEDNDDDNWSEIQKLGKGFAHKSSSEPRKATVRAGVRFYPWLCYSKDRKTQICKFCRVRFHNEAAKARHELSARHVKLVKQFKMRQAKLHQGTNTQTKHNAQDDEESQEQDEEYGEEEEDAEEDSQSNFDLGTVQARKTARADNKLFVKPIPATMKGKVMVWKGRFPWLSYKKNEQRGNYAWCKLCEVSLYLPSSKWASKHQRTSRHIRLRIDRKRNGGNPLKTSNKNSGEISTVVATASALASAEARQKAAMAELQAKYDWLDPDANDENHCHCRVCDSRLPIKVFYLRQHDASRKHVENKERQRANAAAAANAPSVSPTSTVDAERQESGMDKESENDMSVRSDGSTAEPLAKRSRRSMEVRRIIRALRDSMGKRQEERSQMDMARDMICSSFDIVTRLRTLERESVAHNESMAQAPPSVTVSPIKPPEPRHVMDLFFDSISPTMKSLPPDLAAEGKSKIMQLVCSLELRAMQRNATTPTPATVSASSKWPSSTTVTPVKTPPAPISAPLASVDADLHSSVVTTPHEYNNGQNNNNDKETVPKEPVTGASSAQVTINGSAKDLPENIRRILTSNQTQVTNRLETDSVRCVPLDKLTTQSRTNVNGRLSQGGTSEAPSTPQADLSNGNTLAMIRQIRVNNNNSSKITVTNTPQMQQPQQAQASITSSTPIMRGGPSSNGCQITTFRTMVNHNRRP.

2 disordered regions span residues 107-148 and 160-186; these read LNNP…HSYH and HDPG…GGMR. The segment covering 132–141 has biased composition (polar residues); it reads STKTEPSSDA. Acidic residues predominate over residues 164-175; that stretch reads DSQDDDDEDDES. Phosphoserine is present on residues Ser-165, Ser-175, and Ser-176. 4 consecutive C2H2-type zinc fingers follow at residues 217–236, 319–343, 425–446, and 487–512; these read CLYC…IQQH, CRIC…TKGH, CTLC…TRAH, and CSVC…SEKH. A compositionally biased stretch (basic and acidic residues) spans 343–354; the sequence is HMEALRNLDSDK. The segment at 343-398 is disordered; sequence HMEALRNLDSDKRSRKRKRSKSNSVTNSGGDEAEREKESEPEVGPEDAQDTPVVMM. The tract at residues 525–564 is disordered; it reads VGSADGRGGDNMDEEEAAASDQAQSSQTDDSEDNDDDNWS. The span at 543 to 552 shows a compositional bias: low complexity; the sequence is ASDQAQSSQT. The segment covering 553-563 has biased composition (acidic residues); that stretch reads DDSEDNDDDNW. The C2H2-type 5 zinc-finger motif lies at 605 to 629; the sequence is QICKFCRVRFHNEAAKARHELSARH. Residues 642 to 684 are disordered; sequence KLHQGTNTQTKHNAQDDEESQEQDEEYGEEEEDAEEDSQSNFD. Residues 657 to 679 show a composition bias toward acidic residues; sequence DDEESQEQDEEYGEEEEDAEEDS. 2 consecutive C2H2-type zinc fingers follow at residues 737–761 and 829–852; these read CKLC…TSRH and CRVC…SRKH. Positions 851–860 are enriched in basic and acidic residues; that stretch reads KHVENKERQR. The tract at residues 851–915 is disordered; that stretch reads KHVENKERQR…PLAKRSRRSM (65 aa). Phosphoserine occurs at positions 871 and 873. Over residues 879 to 897 the composition is skewed to basic and acidic residues; sequence DAERQESGMDKESENDMSV. Ser-975 is subject to Phosphoserine. Positions 987–1026 constitute a BESS domain; sequence RHVMDLFFDSISPTMKSLPPDLAAEGKSKIMQLVCSLELR. Residues 1032 to 1055 are compositionally biased toward low complexity; the sequence is ATTPTPATVSASSKWPSSTTVTPV. Disordered regions lie at residues 1032–1060, 1079–1116, 1154–1180, and 1205–1236; these read ATTP…TPPA, TTPH…NGSA, QSRT…ADLS, and NTPQ…NGCQ. Composition is skewed to polar residues over residues 1079–1091 and 1104–1114; these read TTPH…QNNN and GASSAQVTING. Low complexity predominate over residues 1206-1224; it reads TPQMQQPQQAQASITSSTP.

Interacts with Su(var)39 through the BESS domain.

The protein resides in the nucleus. Functionally, dose-limiting factor in position-effect variegation, the inactivation in some cells of a gene translocated next to heterochromatin. It could play a role in chromosome condensation. This is Protein suppressor of variegation 3-7 (Su(var)3-7) from Drosophila melanogaster (Fruit fly).